The primary structure comprises 121 residues: Natriuretic peptides B (121 aa).

Residues 1-26 (MDLQKVLPQMILLLLFLNLSPLGGHS) form the signal peptide. A disulfide bond links cysteine 99 and cysteine 115.

The protein belongs to the natriuretic peptide family. The precursor molecule is proteolytically cleaved by the endoprotease Furin to produce brain natriuretic peptide 45. May undergo further proteolytic cleavage by various proteases such as DPP4, MME and possibly FAP, to give rise to a variety of shorter peptides. May be cleaved at Ser-91 by the prolyl endopeptidase FAP (seprase) activity (in vitro). May be degraded by IDE. During IDE degradation, the resulting products initially increase the activation of NPR1 and can also stimulate NPR2 to produce cGMP before the fragments are completely degraded and inactivated by IDE (in vitro). Expressed in the atria and ventricles, but at much lower levels than NPPA. Expression levels in the ventricles are slightly higher than in the atria. Very low levels of expression detected in the brain, hypothalamus, lung and aorta. As to expression, atria (at protein level). Cardiocytes (at protein level).

Its subcellular location is the secreted. In terms of biological role, cardiac hormone that plays a key role in mediating cardio-renal homeostasis. May also function as a paracrine antifibrotic factor in the heart. Acts by specifically binding and stimulating NPR1 to produce cGMP, which in turn activates effector proteins that drive various biological responses. Likely involved in regulating the extracellular fluid volume and maintaining the fluid-electrolyte balance through natriuresis, diuresis, kaluresis and chloruresis. The sequence is that of Natriuretic peptides B (Nppb) from Rattus norvegicus (Rat).